A 991-amino-acid chain; its full sequence is Seizure protein 6 (991 aa).

A signal peptide spans 1-19; the sequence is MRPAALLLLPSLLALLAHG. Residues 20 to 922 lie on the Extracellular side of the membrane; that stretch reads LSSEAPITGE…AASSALDAAH (903 aa). The disordered stretch occupies residues 79–193; that stretch reads EGLEREEAPQ…QEGPGDMDRP (115 aa). Positions 119–132 are enriched in low complexity; sequence TSPTPAVAAAPTQP. The span at 175-184 shows a compositional bias: polar residues; it reads PPSQAWTPTQ. A disulfide bond links cysteine 241 and cysteine 268. Positions 241–353 constitute a CUB 1 domain; the sequence is CSWNFSGPEG…HFRYQAYLLS (113 aa). N-linked (GlcNAc...) asparagine glycosylation is present at asparagine 286. In terms of domain architecture, Sushi 1 spans 352 to 411; sequence LSCHFPRRPAYGDVTVTSLHPGGSAHFHCATGYQLKGARFLTCLNATQPFWDSQEPVCIA. 12 cysteine pairs are disulfide-bonded: cysteine 354–cysteine 394, cysteine 380–cysteine 409, cysteine 413–cysteine 440, cysteine 529–cysteine 571, cysteine 556–cysteine 586, cysteine 590–cysteine 616, cysteine 707–cysteine 749, cysteine 735–cysteine 762, cysteine 768–cysteine 810, cysteine 796–cysteine 827, cysteine 835–cysteine 877, and cysteine 863–cysteine 892. Residues asparagine 396, asparagine 433, and asparagine 538 are each glycosylated (N-linked (GlcNAc...) asparagine). The 112-residue stretch at 413–524 folds into the CUB 2 domain; that stretch reads CGGVIRNATT…AGMALRYEAF (112 aa). In terms of domain architecture, Sushi 2 spans 527–588; the sequence is GHCYEPFVKY…WNETEPACRA (62 aa). In terms of domain architecture, CUB 3 spans 590–701; that stretch reads CSGEITDSAG…QGFVIHFFEV (112 aa). Sushi domains lie at 705–764, 766–829, and 833–894; these read DTCP…SCQR, TSCH…KCLL, and KPCH…ICRA. Residues 923–943 traverse the membrane as a helical segment; sequence LAAAIFLPLVAMVLLVGGVYL. Topologically, residues 944 to 991 are cytoplasmic; sequence YFSRFQGKSPLQLPRTHPRPYNRITVESAFDNPTYETGSLSFAGDERI.

The protein belongs to the SEZ6 family. In terms of processing, glycosylated. In terms of tissue distribution, brain-specific. Expressed in extrasynaptic and synaptic subcellular fractions (at protein level). Expression correlates with the most active periods of cortical neurogenesis and neuronal maturation. Expression is restricted to the gray matter with higher levels in the forebrain including the olfactory bulb, anterior olfactory nuclei, olfactory tubercle, striatum, hippocampal CA1 pyramidal cell layer and cerebral cortex. Expression is up-regulated with the convulsant drug, pentylenetetrazole.

The protein resides in the cell membrane. Its subcellular location is the cell projection. The protein localises to the dendrite. It is found in the synapse. It localises to the secreted. The protein resides in the cytoplasm. Its function is as follows. May play a role in cell-cell recognition and in neuronal membrane signaling. Seems to be important for the achievement of the necessary balance between dendrite elongation and branching during the elaboration of a complex dendritic arbor. Involved in the development of appropriate excitatory synaptic connectivity. The sequence is that of Seizure protein 6 (Sez6) from Mus musculus (Mouse).